A 187-amino-acid polypeptide reads, in one-letter code: dCTP deaminase, dUMP-forming (187 aa).

DCTP is bound by residues 99-104 (KSSIAR), Asp117, 125-127 (TLE), Gln146, Tyr159, Lys166, and Gln170. Glu127 serves as the catalytic Proton donor/acceptor.

This sequence belongs to the dCTP deaminase family. In terms of assembly, homotrimer.

It catalyses the reaction dCTP + 2 H2O = dUMP + NH4(+) + diphosphate. The protein operates within pyrimidine metabolism; dUMP biosynthesis; dUMP from dCTP: step 1/1. Bifunctional enzyme that catalyzes both the deamination of dCTP to dUTP and the hydrolysis of dUTP to dUMP without releasing the toxic dUTP intermediate. In Methanoculleus marisnigri (strain ATCC 35101 / DSM 1498 / JR1), this protein is dCTP deaminase, dUMP-forming.